Here is a 305-residue protein sequence, read N- to C-terminus: Auxin-responsive protein IAA27 (305 aa).

An EAR-like (transcriptional repression) motif is present at residues 45–49; it reads LRLGL. Disordered regions lie at residues 96–119 and 155–180; these read TTAT…GKST and KNSM…AKSG. Residues 155–170 are compositionally biased toward polar residues; it reads KNSMASSQSQKPGNNS. The 103-residue stretch at 185-287 folds into the PB1 domain; the sequence is CLYVKVSMEG…SCKKLRIMKS (103 aa).

The protein belongs to the Aux/IAA family. As to quaternary structure, homodimers and heterodimers. Interacts with phytochrome A. Interacts with TPL.

The protein resides in the nucleus. Functionally, aux/IAA proteins are short-lived transcriptional factors that function as repressors of early auxin response genes at low auxin concentrations. Repression is thought to result from the interaction with auxin response factors (ARFs), proteins that bind to the auxin-responsive promoter element (AuxRE). Formation of heterodimers with ARF proteins may alter their ability to modulate early auxin response genes expression. This chain is Auxin-responsive protein IAA27 (IAA27), found in Arabidopsis thaliana (Mouse-ear cress).